Reading from the N-terminus, the 594-residue chain is CTP synthase (594 aa).

An amidoligase domain region spans residues 1 to 272; sequence MARPKNVKYV…DLRVLKKLGL (272 aa). Residue serine 18 coordinates CTP. Serine 18 is a binding site for UTP. 19-24 provides a ligand contact to ATP; the sequence is SLGKGI. Tyrosine 59 is a binding site for L-glutamine. Aspartate 76 is a binding site for ATP. Mg(2+) is bound by residues aspartate 76 and glutamate 146. Residues 153–155, 193–198, and lysine 229 contribute to the CTP site; these read DIE and KTKPTQ. Residues 193 to 198 and lysine 229 contribute to the UTP site; that span reads KTKPTQ. Residues 299-543 form the Glutamine amidotransferase type-1 domain; the sequence is TIVVCGKYTE…VGAAKSYAAV (245 aa). Glycine 363 serves as a coordination point for L-glutamine. Cysteine 390 acts as the Nucleophile; for glutamine hydrolysis in catalysis. Residues 391–394, glutamate 414, and arginine 471 contribute to the L-glutamine site; that span reads LGMQ. Active-site residues include histidine 516 and glutamate 518. Residues 562-571 show a composition bias toward low complexity; that stretch reads AEAYAAYSEE. The tract at residues 562–594 is disordered; that stretch reads AEAYAAYSEESSAESKSFFPDNGGHDEERDSGQ. The segment covering 584 to 594 has biased composition (basic and acidic residues); the sequence is GGHDEERDSGQ.

This sequence belongs to the CTP synthase family. As to quaternary structure, homotetramer.

It carries out the reaction UTP + L-glutamine + ATP + H2O = CTP + L-glutamate + ADP + phosphate + 2 H(+). It catalyses the reaction L-glutamine + H2O = L-glutamate + NH4(+). The catalysed reaction is UTP + NH4(+) + ATP = CTP + ADP + phosphate + 2 H(+). The protein operates within pyrimidine metabolism; CTP biosynthesis via de novo pathway; CTP from UDP: step 2/2. Its activity is regulated as follows. Allosterically activated by GTP, when glutamine is the substrate; GTP has no effect on the reaction when ammonia is the substrate. The allosteric effector GTP functions by stabilizing the protein conformation that binds the tetrahedral intermediate(s) formed during glutamine hydrolysis. Inhibited by the product CTP, via allosteric rather than competitive inhibition. Its function is as follows. Catalyzes the ATP-dependent amination of UTP to CTP with either L-glutamine or ammonia as the source of nitrogen. Regulates intracellular CTP levels through interactions with the four ribonucleotide triphosphates. This Chlorobium phaeovibrioides (strain DSM 265 / 1930) (Prosthecochloris vibrioformis (strain DSM 265)) protein is CTP synthase.